Here is a 100-residue protein sequence, read N- to C-terminus: Large ribosomal subunit protein uL23 (100 aa).

It belongs to the universal ribosomal protein uL23 family. As to quaternary structure, part of the 50S ribosomal subunit. Contacts protein L29, and trigger factor when it is bound to the ribosome.

Functionally, one of the early assembly proteins it binds 23S rRNA. One of the proteins that surrounds the polypeptide exit tunnel on the outside of the ribosome. Forms the main docking site for trigger factor binding to the ribosome. This Thermotoga maritima (strain ATCC 43589 / DSM 3109 / JCM 10099 / NBRC 100826 / MSB8) protein is Large ribosomal subunit protein uL23.